The chain runs to 225 residues: Ribonuclease 3 (225 aa).

One can recognise an RNase III domain in the interval 7 to 129 (IPRLCRTLGY…IIGAIYLDSD (123 aa)). Glu42 contacts Mg(2+). Residue Asp46 is part of the active site. Asp115 and Glu118 together coordinate Mg(2+). Glu118 is an active-site residue. One can recognise a DRBM domain in the interval 155 to 225 (DPKTLLQEHL…AAQVLELIKK (71 aa)).

This sequence belongs to the ribonuclease III family. As to quaternary structure, homodimer. It depends on Mg(2+) as a cofactor.

Its subcellular location is the cytoplasm. It catalyses the reaction Endonucleolytic cleavage to 5'-phosphomonoester.. In terms of biological role, digests double-stranded RNA. Involved in the processing of primary rRNA transcript to yield the immediate precursors to the large and small rRNAs (23S and 16S). Processes some mRNAs, and tRNAs when they are encoded in the rRNA operon. Processes pre-crRNA and tracrRNA of type II CRISPR loci if present in the organism. The chain is Ribonuclease 3 from Shewanella piezotolerans (strain WP3 / JCM 13877).